The primary structure comprises 374 residues: Very late expression factor 1 (374 aa).

A Tyr recombinase domain is found at 169–349 (AIDTILNFID…NFDESSSDEE (181 aa)). Catalysis depends on residues Arg-210, Lys-239, Arg-303, and His-326. The interval 328–374 (SPASTKPYLNKYNFDESSSDEESGGNNRDSSTGSSANSSSLYYQTGD) is disordered. The O-(3'-phospho-DNA)-tyrosine intermediate role is filled by Tyr-335. Over residues 357-367 (SSTGSSANSSS) the composition is skewed to low complexity.

It belongs to the 'phage' integrase family.

Involved in very late gene activation. The sequence is that of Very late expression factor 1 (VLF-1) from Orgyia pseudotsugata (Douglas-fir tussock moth).